Consider the following 458-residue polypeptide: Bifunctional protein GlmU (458 aa).

Residues 1 to 230 (MSLPTYSKLN…EWQVAGINSK (230 aa)) form a pyrophosphorylase region. UDP-N-acetyl-alpha-D-glucosamine is bound by residues 14–17 (LAAG), Lys-28, Gln-79, and 84–85 (GT). A Mg(2+)-binding site is contributed by Asp-108. Residues Gly-141, Glu-155, Asn-170, and Asn-228 each coordinate UDP-N-acetyl-alpha-D-glucosamine. Asn-228 lines the Mg(2+) pocket. The tract at residues 231–251 (QDLAALERVYQGRYAARLLAK) is linker. An N-acetyltransferase region spans residues 252–458 (GVTLADPSRI…NWKRPEKVKK (207 aa)). 2 residues coordinate UDP-N-acetyl-alpha-D-glucosamine: Arg-334 and Lys-352. Residue His-364 is the Proton acceptor of the active site. Residues Tyr-367 and Asn-378 each coordinate UDP-N-acetyl-alpha-D-glucosamine. Acetyl-CoA contacts are provided by residues Ala-381, 387–388 (NY), Ser-406, Ala-424, and Arg-441.

This sequence in the N-terminal section; belongs to the N-acetylglucosamine-1-phosphate uridyltransferase family. The protein in the C-terminal section; belongs to the transferase hexapeptide repeat family. As to quaternary structure, homotrimer. Mg(2+) serves as cofactor.

Its subcellular location is the cytoplasm. The enzyme catalyses alpha-D-glucosamine 1-phosphate + acetyl-CoA = N-acetyl-alpha-D-glucosamine 1-phosphate + CoA + H(+). It catalyses the reaction N-acetyl-alpha-D-glucosamine 1-phosphate + UTP + H(+) = UDP-N-acetyl-alpha-D-glucosamine + diphosphate. It participates in nucleotide-sugar biosynthesis; UDP-N-acetyl-alpha-D-glucosamine biosynthesis; N-acetyl-alpha-D-glucosamine 1-phosphate from alpha-D-glucosamine 6-phosphate (route II): step 2/2. It functions in the pathway nucleotide-sugar biosynthesis; UDP-N-acetyl-alpha-D-glucosamine biosynthesis; UDP-N-acetyl-alpha-D-glucosamine from N-acetyl-alpha-D-glucosamine 1-phosphate: step 1/1. Its pathway is bacterial outer membrane biogenesis; LPS lipid A biosynthesis. Its function is as follows. Catalyzes the last two sequential reactions in the de novo biosynthetic pathway for UDP-N-acetylglucosamine (UDP-GlcNAc). The C-terminal domain catalyzes the transfer of acetyl group from acetyl coenzyme A to glucosamine-1-phosphate (GlcN-1-P) to produce N-acetylglucosamine-1-phosphate (GlcNAc-1-P), which is converted into UDP-GlcNAc by the transfer of uridine 5-monophosphate (from uridine 5-triphosphate), a reaction catalyzed by the N-terminal domain. In Methylobacillus flagellatus (strain ATCC 51484 / DSM 6875 / VKM B-1610 / KT), this protein is Bifunctional protein GlmU.